The following is a 331-amino-acid chain: Gem-associated protein 2 (331 aa).

Disordered regions lie at residues 1–23 (MDEFQSKAFEVGEEIEPDDNEPL), 101–130 (SNRPSNNNNNNNNNNNNNNNNNNNNNLIPQ), and 151–222 (NNNN…TKKP). Over residues 11–21 (VGEEIEPDDNE) the composition is skewed to acidic residues. The segment covering 106–126 (NNNNNNNNNNNNNNNNNNNNN) has biased composition (low complexity). Residues 165 to 215 (DNQEDDDDDENNEDYEYNENKEEEEEEEEEEEEEEEVEEEEEEEEEEEEVV) are compositionally biased toward acidic residues. A coiled-coil region spans residues 173–224 (DENNEDYEYNENKEEEEEEEEEEEEEEEVEEEEEEEEEEEEVVDYSTKKPTL).

It belongs to the gemin-2 family.

The protein resides in the nucleus. The protein localises to the gem. Its subcellular location is the cytoplasm. Functionally, the SMN complex catalyzes the assembly of small nuclear ribonucleoproteins (snRNPs), the building blocks of the spliceosome, and thereby plays an important role in the splicing of cellular pre-mRNAs. Most spliceosomal snRNPs contain a common set of Sm proteins SNRPB, SNRPD1, SNRPD2, SNRPD3, SNRPE, SNRPF and SNRPG that assemble in a heptameric protein ring on the Sm site of the small nuclear RNA to form the core snRNP (Sm core). In the cytosol, the Sm proteins SNRPD1, SNRPD2, SNRPE, SNRPF and SNRPG (5Sm) are trapped in an inactive 6S pICln-Sm complex by the chaperone CLNS1A that controls the assembly of the core snRNP. To assemble core snRNPs, the SMN complex accepts the trapped 5Sm proteins from CLNS1A. Binding of snRNA inside 5Sm ultimately triggers eviction of the SMN complex, thereby allowing binding of SNRPD3 and SNRPB to complete assembly of the core snRNP. Within the SMN complex, GEMIN2 constrains the conformation of 5Sm, thereby promoting 5Sm binding to snRNA containing the snRNP code (a nonameric Sm site and a 3'-adjacent stem-loop), thus preventing progression of assembly until a cognate substrate is bound. Its function is as follows. May play an essential role in spliceosomal snRNP assembly in the cytoplasm and may be required for pre-mRNA splicing in the nucleus. In Dictyostelium discoideum (Social amoeba), this protein is Gem-associated protein 2 (gemin2).